Here is a 307-residue protein sequence, read N- to C-terminus: Protoheme IX farnesyltransferase (307 aa).

Helical transmembrane passes span 29–49 (VISL…RGWP), 51–71 (LGLL…AGVF), 101–120 (AAIF…WVWA), 124–143 (AAWM…TLWL), 151–171 (IVLG…AVTG), 179–199 (FLFA…ALMI), 218–238 (RLTV…SVMP), 239–259 (VFLG…GWLL), and 280–300 (VAVP…VAGA).

The protein belongs to the UbiA prenyltransferase family. Protoheme IX farnesyltransferase subfamily.

It localises to the cell membrane. It carries out the reaction heme b + (2E,6E)-farnesyl diphosphate + H2O = Fe(II)-heme o + diphosphate. The protein operates within porphyrin-containing compound metabolism; heme O biosynthesis; heme O from protoheme: step 1/1. Functionally, converts heme B (protoheme IX) to heme O by substitution of the vinyl group on carbon 2 of heme B porphyrin ring with a hydroxyethyl farnesyl side group. In Deinococcus geothermalis (strain DSM 11300 / CIP 105573 / AG-3a), this protein is Protoheme IX farnesyltransferase.